The sequence spans 378 residues: MATVIHNPLKALGDQFYKEAIEHCRSYNSRLCAERSVRLPFLDSQTGVAQNNCYIWMEKRHRGPGLAPGQLYTYPARCWRKKRRLHPPEDPKLRLLEIKPEVELPLKKDGFTSESTTLEALLRGEGVEKKVDAREEESIQEIQRVLENDENVEEGNEEEDLEEDIPKRKNRTRGRARGSAGGRRRHDAASQEDHDKPYVCDICGKRYKNRPGLSYHYAHTHLASEEGDEAQDQETRSPPNHRNENHRPQKGPDGTVIPNNYCDFCLGGSNMNKKSGRPEELVSCADCGRSGHPTCLQFTLNMTEAVKTYKWQCIECKSCILCGTSENDDQLLFCDDCDRGYHMYCLNPPVAEPPEGSWSCHLCWELLKEKASAFGCQA.

A Glycyl lysine isopeptide (Lys-Gly) (interchain with G-Cter in SUMO2) cross-link involves residue K99. The segment at 145 to 193 (VLENDENVEEGNEEEDLEEDIPKRKNRTRGRARGSAGGRRRHDAASQED) is disordered. Residues 148-163 (NDENVEEGNEEEDLEE) show a composition bias toward acidic residues. Basic residues predominate over residues 168–186 (RKNRTRGRARGSAGGRRRH). Residues 198–221 (YVCDICGKRYKNRPGLSYHYAHTH) form a C2H2-type zinc finger. Residues 225-254 (EEGDEAQDQETRSPPNHRNENHRPQKGPDG) are disordered. PHD-type zinc fingers lie at residues 259 to 319 (NNYC…CKSC) and 316 to 366 (CKSC…CWEL). Positions 317 to 332 (KSCILCGTSENDDQLL) are interaction with HDGFL2. G323 carries the post-translational modification Phosphoserine.

Belongs to the requiem/DPF family. As to quaternary structure, component of the BAF complex, which includes at least actin (ACTB), ARID1A, ARID1B/BAF250, SMARCA2, SMARCA4/BRG1/BAF190A, ACTL6A/BAF53, ACTL6B/BAF53B, SMARCE1/BAF57, SMARCC1/BAF155, SMARCC2/BAF170, SMARCB1/SNF5/INI1, and one or more of SMARCD1/BAF60A, SMARCD2/BAF60B, or SMARCD3/BAF60C. In muscle cells, the BAF complex also contains DPF3. Interacts with acetylated histones H3 and H4. Component of neuron-specific chromatin remodeling complex (nBAF complex) composed of at least, ARID1A/BAF250A or ARID1B/BAF250B, SMARCD1/BAF60A, SMARCD3/BAF60C, SMARCA2/BRM/BAF190B, SMARCA4/BRG1/BAF190A, SMARCB1/BAF47, SMARCC1/BAF155, SMARCE1/BAF57, SMARCC2/BAF170, DPF1/BAF45B, DPF3/BAF45C, ACTL6B/BAF53B and actin. In terms of assembly, interacts with HDGFL2, SMARCA4/BRG1/BAF190A, SMARCC1/BAF155 and SMARCD1/BAF60A. Phosphorylation at Ser-323 enhances its interaction with HDGFL2.

It localises to the nucleus. Functionally, belongs to the neuron-specific chromatin remodeling complex (nBAF complex). During neural development a switch from a stem/progenitor to a post-mitotic chromatin remodeling mechanism occurs as neurons exit the cell cycle and become committed to their adult state. The transition from proliferating neural stem/progenitor cells to post-mitotic neurons requires a switch in subunit composition of the npBAF and nBAF complexes. As neural progenitors exit mitosis and differentiate into neurons, npBAF complexes which contain ACTL6A/BAF53A and PHF10/BAF45A, are exchanged for homologous alternative ACTL6B/BAF53B and DPF1/BAF45B or DPF3/BAF45C subunits in neuron-specific complexes (nBAF). The npBAF complex is essential for the self-renewal/proliferative capacity of the multipotent neural stem cells. The nBAF complex along with CREST plays a role regulating the activity of genes essential for dendrite growth. Muscle-specific component of the BAF complex, a multiprotein complex involved in transcriptional activation and repression of select genes by chromatin remodeling (alteration of DNA-nucleosome topology). Specifically binds acetylated lysines on histone 3 and 4 (H3K14ac, H3K9ac, H4K5ac, H4K8ac, H4K12ac, H4K16ac). In the complex, it acts as a tissue-specific anchor between histone acetylations and methylations and chromatin remodeling. It thereby probably plays an essential role in heart and skeletal muscle development. Acts as a regulator of myogenesis in cooperation with HDGFL2. Mediates the interaction of HDGFL2 with the BAF complex. HDGFL2-DPF3a activate myogenic genes by increasing chromatin accessibility through recruitment of SMARCA4/BRG1/BAF190A (ATPase subunit of the BAF complex) to myogenic gene promoters. This is Zinc finger protein DPF3 (DPF3) from Homo sapiens (Human).